The primary structure comprises 205 residues: Probable thymidylate kinase (205 aa).

Gly10 to Thr17 contributes to the ATP binding site.

Belongs to the thymidylate kinase family.

The catalysed reaction is dTMP + ATP = dTDP + ADP. In Pyrococcus horikoshii (strain ATCC 700860 / DSM 12428 / JCM 9974 / NBRC 100139 / OT-3), this protein is Probable thymidylate kinase (tmk).